The sequence spans 159 residues: Small ribosomal subunit protein uS17 (159 aa).

Belongs to the universal ribosomal protein uS17 family.

The sequence is that of Small ribosomal subunit protein uS17 (RPS11) from Euphorbia esula (Leafy spurge).